Here is an 88-residue protein sequence, read N- to C-terminus: Small ribosomal subunit protein bS20 (88 aa).

Residues 1–27 are disordered; that stretch reads MANTKQAQKRARQAEQRRQHNASQRSM.

The protein belongs to the bacterial ribosomal protein bS20 family.

In terms of biological role, binds directly to 16S ribosomal RNA. The protein is Small ribosomal subunit protein bS20 of Chromohalobacter salexigens (strain ATCC BAA-138 / DSM 3043 / CIP 106854 / NCIMB 13768 / 1H11).